The chain runs to 305 residues: Probable G-protein coupled receptor 141 (305 aa).

The Extracellular segment spans residues 1–22 (MPGHNTSRNSSCDPIVTPHLIS). N-linked (GlcNAc...) asparagine glycosylation is found at asparagine 5 and asparagine 9. The helical transmembrane segment at 23–43 (LYFIVLIGGLVGVISILFLLV) threads the bilayer. Residues 44 to 50 (KMNTRSV) are Cytoplasmic-facing. A helical membrane pass occupies residues 51–71 (TTMAVINLVVVHSVFLLTVPF). At 72-89 (RLTYLIKKTWMFGLPFCK) the chain is on the extracellular side. A helical transmembrane segment spans residues 90–110 (FVSAMLHIHMYLTFLFYVVIL). The Cytoplasmic portion of the chain corresponds to 111-131 (VTRYLIFFKCKDKVEFYRKLH). Residues 132 to 152 (AVAASAGMWTLVIVIVVPLVV) form a helical membrane-spanning segment. At 153–183 (SRYGIHEEYNEEHCFKFHKELAYTYVKIINY) the chain is on the extracellular side. Residues 184–204 (MIVIFVIAVAVILLVFQVFII) form a helical membrane-spanning segment. Over 205–227 (MLMVQKLRHSLLSHQEFWAQLKN) the chain is Cytoplasmic. A helical membrane pass occupies residues 228 to 248 (LFFIGVILVCFLPYQFFRIYY). Topologically, residues 249 to 267 (LNVVTHSNACNSKVAFYNE) are extracellular. A helical transmembrane segment spans residues 268–288 (IFLSVTAISCYDLLLFVFGGS). Residues 289-305 (HWFKQKIIGLWNCVLCR) lie on the Cytoplasmic side of the membrane.

Belongs to the G-protein coupled receptor 1 family.

The protein resides in the cell membrane. Its function is as follows. Orphan receptor. In Homo sapiens (Human), this protein is Probable G-protein coupled receptor 141 (GPR141).